We begin with the raw amino-acid sequence, 382 residues long: Kelch domain-containing protein 3 (382 aa).

5 Kelch repeats span residues 25–77 (RVYS…PYMR), 88–138 (TVFL…VLGK), 139–189 (IMYI…TMLG), 191–249 (HMYV…GYNG), and 251–301 (LYIF…IVGD).

Component of a CRL2(KLHDC3) complex, also named ECS(KLHDC3) complex, composed of CUL2, Elongin BC (ELOB and ELOC), RBX1 and substrate-specific adapter KLHDC3. May form oligomers as a KLHDC3-ELOB-ELOC complex; this interaction is likely autoinhibitory for the E3 ligase complex. As to expression, expressed specifically in testis, particularly in pachytene spermatocytes.

The protein resides in the cytoplasm. Its pathway is protein modification; protein ubiquitination. Substrate-recognition component of a Cul2-RING (CRL2) E3 ubiquitin-protein ligase complex of the DesCEND (destruction via C-end degrons) pathway, which recognizes a C-degron located at the extreme C terminus of target proteins, leading to their ubiquitination and degradation. The C-degron recognized by the DesCEND pathway is usually a motif of less than ten residues and can be present in full-length proteins, truncated proteins or proteolytically cleaved forms. The CRL2(KLHDC3) complex specifically recognizes proteins with a glycine (Gly) at the C-terminus, leading to their ubiquitination and degradation: recognizes the C-terminal -Arg-(Xaa)n-Arg-Gly, -Arg-(Xaa)n-Lys-Gly, and -Arg-(Xaa)n-Gln-Gly degrons. The CRL2(KLHDC3) complex mediates ubiquitination and degradation of truncated SELENOV and SEPHS2 selenoproteins produced by failed UGA/Sec decoding, which end with a glycine. May be involved in meiotic recombination process. The sequence is that of Kelch domain-containing protein 3 from Mus musculus (Mouse).